We begin with the raw amino-acid sequence, 335 residues long: Tetraacyldisaccharide 4'-kinase (335 aa).

N62–T69 contacts ATP.

It belongs to the LpxK family.

It carries out the reaction a lipid A disaccharide + ATP = a lipid IVA + ADP + H(+). It functions in the pathway glycolipid biosynthesis; lipid IV(A) biosynthesis; lipid IV(A) from (3R)-3-hydroxytetradecanoyl-[acyl-carrier-protein] and UDP-N-acetyl-alpha-D-glucosamine: step 6/6. Transfers the gamma-phosphate of ATP to the 4'-position of a tetraacyldisaccharide 1-phosphate intermediate (termed DS-1-P) to form tetraacyldisaccharide 1,4'-bis-phosphate (lipid IVA). The chain is Tetraacyldisaccharide 4'-kinase from Methylobacillus flagellatus (strain ATCC 51484 / DSM 6875 / VKM B-1610 / KT).